The chain runs to 550 residues: Arginine--tRNA ligase (550 aa).

The 'HIGH' region motif lies at 130-140 (ANPTGPIHIGG).

The protein belongs to the class-I aminoacyl-tRNA synthetase family. As to quaternary structure, monomer.

The protein resides in the cytoplasm. The enzyme catalyses tRNA(Arg) + L-arginine + ATP = L-arginyl-tRNA(Arg) + AMP + diphosphate. The polypeptide is Arginine--tRNA ligase (argS) (Mycobacterium leprae (strain TN)).